Here is a 1653-residue protein sequence, read N- to C-terminus: Alpha-2-macroglobulin (1653 aa).

The N-terminal stretch at 1 to 17 (MKKLRVAACMLMLALAG) is a signal peptide. C18 carries N-palmitoyl cysteine lipidation. C18 is lipidated: S-diacylglycerol cysteine. Positions 1187–1190 (CLEQ) form a cross-link, isoglutamyl cysteine thioester (Cys-Gln). Positions 1559–1589 (NQNLANGSASLEQSGGEVQNLLNQMQQASIK) form a coiled coil.

Belongs to the protease inhibitor I39 (alpha-2-macroglobulin) family. Bacterial alpha-2-macroglobulin subfamily. May form homooligomers.

The protein resides in the cell inner membrane. In terms of biological role, protects the bacterial cell from host peptidases. Acts by a 'trapping' mechanism. Cleavage of the bait-region domain by host peptidases leads to a global conformational change, which results in entrapment of the host peptidase and activation of the thioester bond that covalently binds the attacking host peptidase. Trapped peptidases are still active except against very large substrates. May protect the entire periplam, including the lipoproteins anchored to the periplasmic side of the outer membrane, against intruding endopeptidases. The polypeptide is Alpha-2-macroglobulin (yfhM) (Escherichia coli (strain K12)).